Here is a 101-residue protein sequence, read N- to C-terminus: Large ribosomal subunit protein bL28 (101 aa).

This sequence belongs to the bacterial ribosomal protein bL28 family.

The sequence is that of Large ribosomal subunit protein bL28 from Caulobacter sp. (strain K31).